Reading from the N-terminus, the 537-residue chain is Lysine--tRNA ligase (537 aa).

Positions 30–38 (PSGNIHIGN) match the 'HIGH' region motif. The 'KMSKS' region signature appears at 276–280 (AMSSS).

The protein belongs to the class-I aminoacyl-tRNA synthetase family.

It is found in the cytoplasm. It carries out the reaction tRNA(Lys) + L-lysine + ATP = L-lysyl-tRNA(Lys) + AMP + diphosphate. The chain is Lysine--tRNA ligase from Methanosarcina barkeri (strain Fusaro / DSM 804).